We begin with the raw amino-acid sequence, 661 residues long: UvrABC system protein B (661 aa).

The region spanning 25–414 is the Helicase ATP-binding domain; sequence AGLNSKKRSQ…DTVVELIIRP (390 aa). 38–45 is a binding site for ATP; it reads GITGSGKT. The Beta-hairpin signature appears at 91-114; that stretch reads YYDYYQPEAYIARTDTFIEKDSSI. Residues 430 to 592 form the Helicase C-terminal domain; that stretch reads QVEDLIGEIQ…IIPKTINRAI (163 aa). The region spanning 621–656 is the UVR domain; sequence KAHIEKLKKDMLKAASNLEFEQAAKLRDQLKTLEEA.

It belongs to the UvrB family. In terms of assembly, forms a heterotetramer with UvrA during the search for lesions. Interacts with UvrC in an incision complex.

The protein resides in the cytoplasm. Its function is as follows. The UvrABC repair system catalyzes the recognition and processing of DNA lesions. A damage recognition complex composed of 2 UvrA and 2 UvrB subunits scans DNA for abnormalities. Upon binding of the UvrA(2)B(2) complex to a putative damaged site, the DNA wraps around one UvrB monomer. DNA wrap is dependent on ATP binding by UvrB and probably causes local melting of the DNA helix, facilitating insertion of UvrB beta-hairpin between the DNA strands. Then UvrB probes one DNA strand for the presence of a lesion. If a lesion is found the UvrA subunits dissociate and the UvrB-DNA preincision complex is formed. This complex is subsequently bound by UvrC and the second UvrB is released. If no lesion is found, the DNA wraps around the other UvrB subunit that will check the other stand for damage. The sequence is that of UvrABC system protein B from Rickettsia felis (strain ATCC VR-1525 / URRWXCal2) (Rickettsia azadi).